A 237-amino-acid chain; its full sequence is Proteasome subunit alpha (237 aa).

It belongs to the peptidase T1A family. As to quaternary structure, the 20S proteasome core is composed of 14 alpha and 14 beta subunits that assemble into four stacked heptameric rings, resulting in a barrel-shaped structure. The two inner rings, each composed of seven catalytic beta subunits, are sandwiched by two outer rings, each composed of seven alpha subunits. The catalytic chamber with the active sites is on the inside of the barrel. Has a gated structure, the ends of the cylinder being occluded by the N-termini of the alpha-subunits. Is capped by the proteasome-associated ATPase, ARC.

It localises to the cytoplasm. The protein operates within protein degradation; proteasomal Pup-dependent pathway. With respect to regulation, the formation of the proteasomal ATPase ARC-20S proteasome complex, likely via the docking of the C-termini of ARC into the intersubunit pockets in the alpha-rings, may trigger opening of the gate for substrate entry. Interconversion between the open-gate and close-gate conformations leads to a dynamic regulation of the 20S proteasome proteolysis activity. Component of the proteasome core, a large protease complex with broad specificity involved in protein degradation. The chain is Proteasome subunit alpha from Kineococcus radiotolerans (strain ATCC BAA-149 / DSM 14245 / SRS30216).